The chain runs to 445 residues: UPF0210 protein STK_02450 (445 aa).

It belongs to the UPF0210 family.

The sequence is that of UPF0210 protein STK_02450 from Sulfurisphaera tokodaii (strain DSM 16993 / JCM 10545 / NBRC 100140 / 7) (Sulfolobus tokodaii).